The sequence spans 131 residues: Small ribosomal subunit protein uS11 (131 aa).

It belongs to the universal ribosomal protein uS11 family. In terms of assembly, part of the 30S ribosomal subunit. Interacts with proteins S7 and S18. Binds to IF-3.

Functionally, located on the platform of the 30S subunit, it bridges several disparate RNA helices of the 16S rRNA. Forms part of the Shine-Dalgarno cleft in the 70S ribosome. This Deinococcus deserti (strain DSM 17065 / CIP 109153 / LMG 22923 / VCD115) protein is Small ribosomal subunit protein uS11.